Reading from the N-terminus, the 142-residue chain is Large ribosomal subunit protein uL13 (142 aa).

This sequence belongs to the universal ribosomal protein uL13 family. As to quaternary structure, part of the 50S ribosomal subunit.

Functionally, this protein is one of the early assembly proteins of the 50S ribosomal subunit, although it is not seen to bind rRNA by itself. It is important during the early stages of 50S assembly. This Ectopseudomonas mendocina (strain ymp) (Pseudomonas mendocina) protein is Large ribosomal subunit protein uL13.